The primary structure comprises 321 residues: Lipoyl synthase (321 aa).

[4Fe-4S] cluster contacts are provided by cysteine 68, cysteine 73, cysteine 79, cysteine 94, cysteine 98, cysteine 101, and serine 308. In terms of domain architecture, Radical SAM core spans 80-297; it reads FNHGTATFMI…KEEALAMGFT (218 aa).

This sequence belongs to the radical SAM superfamily. Lipoyl synthase family. [4Fe-4S] cluster serves as cofactor.

The protein localises to the cytoplasm. The catalysed reaction is [[Fe-S] cluster scaffold protein carrying a second [4Fe-4S](2+) cluster] + N(6)-octanoyl-L-lysyl-[protein] + 2 oxidized [2Fe-2S]-[ferredoxin] + 2 S-adenosyl-L-methionine + 4 H(+) = [[Fe-S] cluster scaffold protein] + N(6)-[(R)-dihydrolipoyl]-L-lysyl-[protein] + 4 Fe(3+) + 2 hydrogen sulfide + 2 5'-deoxyadenosine + 2 L-methionine + 2 reduced [2Fe-2S]-[ferredoxin]. It participates in protein modification; protein lipoylation via endogenous pathway; protein N(6)-(lipoyl)lysine from octanoyl-[acyl-carrier-protein]: step 2/2. Functionally, catalyzes the radical-mediated insertion of two sulfur atoms into the C-6 and C-8 positions of the octanoyl moiety bound to the lipoyl domains of lipoate-dependent enzymes, thereby converting the octanoylated domains into lipoylated derivatives. The sequence is that of Lipoyl synthase from Photorhabdus laumondii subsp. laumondii (strain DSM 15139 / CIP 105565 / TT01) (Photorhabdus luminescens subsp. laumondii).